The chain runs to 330 residues: Putative protein N-methyltransferase FAM86B2 (330 aa).

The residue at position 1 (M1) is an N-acetylmethionine. Residues W139, 165–167, W228, and A247 contribute to the S-adenosyl-L-methionine site; that span reads GSG.

The protein belongs to the class I-like SAM-binding methyltransferase superfamily. EEF2KMT family. In terms of assembly, interacts with EEF2KMT.

The sequence is that of Putative protein N-methyltransferase FAM86B2 (FAM86B2) from Homo sapiens (Human).